A 666-amino-acid chain; its full sequence is UvrABC system protein B (666 aa).

The region spanning 28–171 (NNINQGIQRQ…YLHVGELIEF (144 aa)) is the Helicase ATP-binding domain. 41-48 (GATGTGKT) serves as a coordination point for ATP. Positions 94–117 (YFDYYQPEAYKPITDTYIEKDSVT) match the Beta-hairpin motif. One can recognise a Helicase C-terminal domain in the interval 436–598 (QIDDLINELM…IIPKTIIKPI (163 aa)). One can recognise a UVR domain in the interval 624-659 (NQKIKELKKKMEEAAKKREYEVAAQYRDMIVELEAI).

It belongs to the UvrB family. Forms a heterotetramer with UvrA during the search for lesions. Interacts with UvrC in an incision complex.

It is found in the cytoplasm. The UvrABC repair system catalyzes the recognition and processing of DNA lesions. A damage recognition complex composed of 2 UvrA and 2 UvrB subunits scans DNA for abnormalities. Upon binding of the UvrA(2)B(2) complex to a putative damaged site, the DNA wraps around one UvrB monomer. DNA wrap is dependent on ATP binding by UvrB and probably causes local melting of the DNA helix, facilitating insertion of UvrB beta-hairpin between the DNA strands. Then UvrB probes one DNA strand for the presence of a lesion. If a lesion is found the UvrA subunits dissociate and the UvrB-DNA preincision complex is formed. This complex is subsequently bound by UvrC and the second UvrB is released. If no lesion is found, the DNA wraps around the other UvrB subunit that will check the other stand for damage. In Ureaplasma parvum serovar 3 (strain ATCC 27815 / 27 / NCTC 11736), this protein is UvrABC system protein B.